A 394-amino-acid chain; its full sequence is MAKAKFERIKPHVNVGTIGHVDHGKTTLTAAISAVLSKTYGGEVKNFAQIDNAPEERERGITINTSHIEYDTPIRHYAHVDCPGHADYVKNMITGAAQMDGAILVVAATDGPMPQTREHILLSRQVGVPFIIVFMNKCDMVDDEELLELVEMEVRELLSEYDFPGDDLPVIQGSALKALEGQPEWEAKILELAEALDTYIPEPARDIDKPFLLPIEDVFSISGRGTVVTGRVERGIVRVSDEVEIVGVRPTTKTTCTGVEMFRKLLDEGRAGENCGVLLRGTKRDDVERGQVLAKPGSINPHTTFESEVYVLSKEEGGRHTPFFKGYRPQFFFRTTDVTGTIELPEGVEMVMPGDNIKMVVTLIYPIAMDDGLRFAIREGGRTVGAGVVAKIIA.

One can recognise a tr-type G domain in the interval 10 to 204 (KPHVNVGTIG…ALDTYIPEPA (195 aa)). Residues 19–26 (GHVDHGKT) are G1. 19 to 26 (GHVDHGKT) contacts GTP. Thr-26 is a binding site for Mg(2+). The interval 60 to 64 (GITIN) is G2. Positions 81–84 (DCPG) are G3. GTP-binding positions include 81–85 (DCPGH) and 136–139 (NKCD). The segment at 136–139 (NKCD) is G4. The G5 stretch occupies residues 174–176 (SAL).

It belongs to the TRAFAC class translation factor GTPase superfamily. Classic translation factor GTPase family. EF-Tu/EF-1A subfamily. As to quaternary structure, monomer.

Its subcellular location is the cytoplasm. It carries out the reaction GTP + H2O = GDP + phosphate + H(+). Functionally, GTP hydrolase that promotes the GTP-dependent binding of aminoacyl-tRNA to the A-site of ribosomes during protein biosynthesis. This Shewanella frigidimarina (strain NCIMB 400) protein is Elongation factor Tu 2.